Here is a 434-residue protein sequence, read N- to C-terminus: KH domain-containing protein 3 (434 aa).

Positions 1 to 39 (MATLKTFRTLVQLKHKLGKAYEIVGEPRLPKWFHVEYLE) are involved in RNA binding. The KH; atypical domain maps to 40–118 (DPKKMYVEPT…CRMKLMEKEA (79 aa)). 2 positions are modified to phosphothreonine: Thr267 and Thr279. The required for interaction with NUMA1 and regulation of apoptosis in response to DNA damage stretch occupies residues 334-434 (VREAATQQTP…RAVWEPFVML (101 aa)).

This sequence belongs to the KHDC1 family. In terms of assembly, component of the subcortical maternal complex (SCMC), at least composed of NLRP5, KHDC3, OOEP, and TLE6. Within the complex, interacts with NLRP5, KHDC3 and TLE6. The SCMC may facilitate translocation of its components between the nuclear and cytoplasmic compartments. Forms a scaffold complex with OOEP/FLOPED, and interacts with BLM and TRIM25 at DNA replication forks. Interacts with PARP1; the interaction is increased following the formation of DNA double-strand breaks. Interacts (via C-terminus) with NUMA1.

It is found in the cytoplasm. Its subcellular location is the cell cortex. The protein resides in the nucleus. It localises to the mitochondrion. The protein localises to the cytoskeleton. It is found in the microtubule organizing center. Its subcellular location is the centrosome. The protein resides in the chromosome. Functionally, component of the subcortical maternal complex (SCMC), a multiprotein complex that plays a key role in early embryonic development. The SCMC complex is a structural constituent of cytoplasmic lattices, which consist in fibrous structures found in the cytoplasm of oocytes and preimplantation embryos. They are required to store maternal proteins critical for embryonic development, such as proteins that control epigenetic reprogramming of the preimplantation embryo, and prevent their degradation or activation. KHDC3 ensures proper spindle assembly by regulating the localization of AURKA via RHOA signaling and of PLK1 via a RHOA-independent process. Required for the localization of MAD2L1 to kinetochores to enable spindle assembly checkpoint function. As part of the OOEP-KHDC3 scaffold, recruits BLM and TRIM25 to DNA replication forks, thereby promoting the ubiquitination of BLM by TRIM25, enhancing BLM retainment at replication forks and therefore promoting stalled replication fork restart. Regulates homologous recombination-mediated DNA repair via recruitment of RAD51 to sites of DNA double-strand breaks, and sustainment of PARP1 activity, which in turn modulates downstream ATM or ATR activation. Activation of ATM or ATR in response to DNA double-strand breaks may be cell-type specific. Its role in DNA double-strand break repair is independent of its role in restarting stalled replication forks. Promotes neural stem cell neurogenesis and neuronal differentiation in the hippocampus. May regulate normal development of learning, memory and anxiety. Capable of binding RNA. The protein is KH domain-containing protein 3 of Rattus norvegicus (Rat).